A 381-amino-acid polypeptide reads, in one-letter code: Creatine kinase M-type (381 aa).

A Phosphagen kinase N-terminal domain is found at 11-98; the sequence is KLNYKPEEEY…FDPIIQDRHG (88 aa). The 243-residue stretch at 125–367 folds into the Phosphagen kinase C-terminal domain; the sequence is YVLSSRVRTG…KLMVEMEKKL (243 aa). 128–132 provides a ligand contact to ATP; the sequence is SSRVR. The residue at position 164 (Ser-164) is a Phosphoserine. Phosphothreonine is present on Thr-166. The residue at position 178 (Ser-178) is a Phosphoserine. Phosphothreonine is present on Thr-180. An ATP-binding site is contributed by His-191. Ser-199 is modified (phosphoserine). ATP-binding residues include Arg-236 and Arg-292. Phosphothreonine is present on residues Thr-313 and Thr-322. Residues 320–325 and Asp-335 each bind ATP; that span reads RGTGGV. Ser-372 bears the Phosphoserine mark.

This sequence belongs to the ATP:guanido phosphotransferase family. As to quaternary structure, dimer of identical or non-identical chains, which can be either B (brain type) or M (muscle type). With MM being the major form in skeletal muscle and myocardium, MB existing in myocardium, and BB existing in many tissues, especially brain.

The protein resides in the cytoplasm. The enzyme catalyses creatine + ATP = N-phosphocreatine + ADP + H(+). Its function is as follows. Reversibly catalyzes the transfer of phosphate between ATP and various phosphogens (e.g. creatine phosphate). Creatine kinase isoenzymes play a central role in energy transduction in tissues with large, fluctuating energy demands, such as skeletal muscle, heart, brain and spermatozoa. This Canis lupus familiaris (Dog) protein is Creatine kinase M-type (CKM).